The following is a 300-amino-acid chain: Sulfate adenylyltransferase subunit 2 (300 aa).

A disordered region spans residues 281–300; it reads RAIDRDEAGSMEKKKREGYF.

It belongs to the PAPS reductase family. CysD subfamily. Heterodimer composed of CysD, the smaller subunit, and CysN.

The enzyme catalyses sulfate + ATP + H(+) = adenosine 5'-phosphosulfate + diphosphate. It functions in the pathway sulfur metabolism; hydrogen sulfide biosynthesis; sulfite from sulfate: step 1/3. Functionally, with CysN forms the ATP sulfurylase (ATPS) that catalyzes the adenylation of sulfate producing adenosine 5'-phosphosulfate (APS) and diphosphate, the first enzymatic step in sulfur assimilation pathway. APS synthesis involves the formation of a high-energy phosphoric-sulfuric acid anhydride bond driven by GTP hydrolysis by CysN coupled to ATP hydrolysis by CysD. The sequence is that of Sulfate adenylyltransferase subunit 2 from Brucella abortus (strain 2308).